Consider the following 336-residue polypeptide: Aspartate carbamoyltransferase catalytic subunit (336 aa).

The carbamoyl phosphate site is built by R71 and T72. Residue K99 coordinates L-aspartate. Residues R121, H151, and Q154 each coordinate carbamoyl phosphate. R184 and R239 together coordinate L-aspartate. Positions 280 and 281 each coordinate carbamoyl phosphate.

The protein belongs to the aspartate/ornithine carbamoyltransferase superfamily. ATCase family. In terms of assembly, heterododecamer (2C3:3R2) of six catalytic PyrB chains organized as two trimers (C3), and six regulatory PyrI chains organized as three dimers (R2).

It catalyses the reaction carbamoyl phosphate + L-aspartate = N-carbamoyl-L-aspartate + phosphate + H(+). Its pathway is pyrimidine metabolism; UMP biosynthesis via de novo pathway; (S)-dihydroorotate from bicarbonate: step 2/3. Catalyzes the condensation of carbamoyl phosphate and aspartate to form carbamoyl aspartate and inorganic phosphate, the committed step in the de novo pyrimidine nucleotide biosynthesis pathway. In Azotobacter vinelandii (strain DJ / ATCC BAA-1303), this protein is Aspartate carbamoyltransferase catalytic subunit.